The primary structure comprises 319 residues: Cytochrome f (319 aa).

Positions M1–A34 are cleaved as a signal peptide. Residues Y35, C55, C58, and H59 each contribute to the heme site. Residues G287–L304 form a helical membrane-spanning segment.

It belongs to the cytochrome f family. In terms of assembly, the 4 large subunits of the cytochrome b6-f complex are cytochrome b6, subunit IV (17 kDa polypeptide, petD), cytochrome f and the Rieske protein, while the 4 small subunits are PetG, PetL, PetM and PetN. The complex functions as a dimer. Heme is required as a cofactor.

It localises to the plastid. The protein resides in the chloroplast thylakoid membrane. Its function is as follows. Component of the cytochrome b6-f complex, which mediates electron transfer between photosystem II (PSII) and photosystem I (PSI), cyclic electron flow around PSI, and state transitions. The protein is Cytochrome f (petA) of Pinus thunbergii (Japanese black pine).